The primary structure comprises 155 residues: Putative pre-16S rRNA nuclease (155 aa).

It belongs to the YqgF nuclease family.

It localises to the cytoplasm. In terms of biological role, could be a nuclease involved in processing of the 5'-end of pre-16S rRNA. In Xanthomonas campestris pv. campestris (strain B100), this protein is Putative pre-16S rRNA nuclease.